Consider the following 127-residue polypeptide: Protein ApaG (127 aa).

Positions 3–127 constitute an ApaG domain; the sequence is NNPSSKIEVA…FVLSVPRTLH (125 aa).

In Xylella fastidiosa (strain M23), this protein is Protein ApaG.